The primary structure comprises 530 residues: UDP-glucuronosyltransferase 2B17 (530 aa).

Residues 1-23 form the signal peptide; the sequence is MSLKWMSVFLLMQLSCYFSSGSC. A glycan (N-linked (GlcNAc...) asparagine) is linked at Asn65. Lys136 carries the N6-succinyllysine modification. N-linked (GlcNAc...) asparagine glycosylation is found at Asn316 and Asn483. Residues 495-515 traverse the membrane as a helical segment; it reads IAFLLACVATMIFMITKCCLF.

Belongs to the UDP-glycosyltransferase family. In terms of tissue distribution, expressed in various tissues including the liver, kidney, testis, uterus, placenta, mammary gland, adrenal gland, skin and prostate.

It localises to the endoplasmic reticulum membrane. It carries out the reaction glucuronate acceptor + UDP-alpha-D-glucuronate = acceptor beta-D-glucuronoside + UDP + H(+). It catalyses the reaction 17alpha-estradiol + UDP-alpha-D-glucuronate = 17alpha-estradiol 3-O-(beta-D-glucuronate) + UDP + H(+). The enzyme catalyses 17alpha-estradiol + UDP-alpha-D-glucuronate = 17alpha-estradiol 17-O-(beta-D-glucuronate) + UDP + H(+). The catalysed reaction is 17beta-estradiol + UDP-alpha-D-glucuronate = 17beta-estradiol 17-O-(beta-D-glucuronate) + UDP + H(+). It carries out the reaction 17beta-hydroxy-5alpha-androstan-3-one + UDP-alpha-D-glucuronate = 5alpha-dihydrotestosterone 17-O-(beta-D-glucuronate) + UDP + H(+). It catalyses the reaction testosterone + UDP-alpha-D-glucuronate = testosterone 17-O-(beta-D-glucuronate) + UDP + H(+). Its function is as follows. UDP-glucuronosyltransferase (UGT) that catalyzes phase II biotransformation reactions in which lipophilic substrates are conjugated with glucuronic acid to increase the metabolite's water solubility, thereby facilitating excretion into either the urine or bile. Catalyzes the glucuronidation of endogenous steroid hormones such as androgens (epitestosterone, androsterone) and estrogens (estradiol, epiestradiol). The polypeptide is UDP-glucuronosyltransferase 2B17 (Homo sapiens (Human)).